Here is a 168-residue protein sequence, read N- to C-terminus: Pleiotrophin (168 aa).

Positions Met1–Ala32 are cleaved as a signal peptide. 5 cysteine pairs are disulfide-bonded: Cys47-Cys76, Cys55-Cys85, Cys62-Cys89, Cys99-Cys131, and Cys109-Cys141. Chondroitin sulfate binding regions lie at residues Lys92–Cys99 and Lys123–Cys131. The tract at residues Lys139–Asp168 is disordered. A chondroitin sulfate A binding region spans residues Pro147–Asp168.

The protein belongs to the pleiotrophin family. As to quaternary structure, interacts with ALK and NEK6. Interacts with PTPRZ1 (via chondroitin sulfate groups); promotes formation of homooligomers; oligomerization impairs tyrosine phosphatase activity. Forms a complex with PTPRZ1 and CTNNB1; this complex inactivates PTPRZ1 protein tyrosine phosphatase activity through PTN interaction and stimulates tyrosine phosphorylation of CTNNB1. Interacts with ITGB3 and ITGA5. Forms a complex with PTPRZ1 and integrin alpha-V/beta-3 (ITGAV:ITGB3) that stimulates endothelial cell migration through ITGB3 'Tyr-773' phosphorylation. Interacts with SDC3 (via heparan sulfate chains); this interaction mediates the neurite outgrowth-promoting signal from PTN to the cytoskeleton of growing neurites; this interaction mediates osteoblast recruitment. Interacts with GPC2 (via heparan sulfate); this interaction promotes neurite outgrowth through binding of PTN with chondroitin sulfate of proteoglycans, thereby releasing PTPRS of chondroitin sulfate proteoglycans (CSPGs) and leading to binding with heparan sulfate of GPC2. Post-translationally, phosphorylated by NEK6. Osteoblast and brain. Expressed in the follicular epithelium and granulosa cells of the ovary. Strongly expressed in the uterus of newborn mice, and the degree of expression decreased in one-week-old mice, although the expression continues even in the uteri of adult mice. Expression gradually increases from proestrus to estrus, then decreases sharply, and thereafter gradually increased again. strongly expressed in the cochlea of WT mice 1 week after birth, and then the expression decreased and was undetectable by week 8 after birth. Expressed around the cell soma of osteocytes and apparently captured in the unmineralized interstitial matrix surrounding the cells. Furthermore distributed throughout the intraosseous canalicular porosity, being localized in the unmineralized matrix around the cell processes. Strongly expressed in the innermost layer of the periosteum.

Its subcellular location is the secreted. Secreted growth factor that mediates its signal through cell-surface proteoglycan and non-proteoglycan receptors. Binds cell-surface proteoglycan receptor via their chondroitin sulfate (CS) groups. Thereby regulates many processes like cell proliferation, cell survival, cell growth, cell differentiation and cell migration in several tissues namely neuron and bone. Also plays a role in synaptic plasticity and learning-related behavior by inhibiting long-term synaptic potentiation. Binds PTPRZ1, leading to neutralization of the negative charges of the CS chains of PTPRZ1, inducing PTPRZ1 clustering, thereby causing the dimerization and inactivation of its phosphatase activity leading to increased tyrosine phosphorylation of each of the PTPRZ1 substrates like ALK or AFAP1L2 in order to activate the PI3K-AKT pathway. Through PTPRZ1 binding controls oligodendrocyte precursor cell differentiation by enhancing the phosphorylation of AFAP1L2 in order to activate the PI3K-AKT pathway. Forms a complex with PTPRZ1 and integrin alpha-V/beta-3 (ITGAV:ITGB3) that stimulates endothelial cell migration through SRC dephosphorylation and activation that consequently leads to ITGB3 'Tyr-773' phosphorylation. In adult hippocampus promotes dendritic arborization, spine development, and functional integration and connectivity of newborn granule neurons through ALK by activating AKT signaling pathway. Binds GPC2 and chondroitin sulfate proteoglycans (CSPGs) at the neuron surface, leading to abrogation of binding between PTPRS and CSPGs and neurite outgrowth promotion. Binds SDC3 and mediates bone formation by recruiting and attaching osteoblasts/osteoblast precursors to the sites for new bone deposition. Binds ALK and promotes cell survival and cell proliferation through MAPK pathway activation. Inhibits proliferation and enhances differentiation of neural stem cells by inhibiting FGF2-induced fibroblast growth factor receptor signaling pathway. Mediates regulatory mechanisms in normal hemostasis and in hematopoietic regeneration and in maintaining the balance of myeloid and lymphoid regeneration. In addition may play a role in the female reproductive system, auditory response and the progesterone-induced decidualization pathway. The protein is Pleiotrophin of Mus musculus (Mouse).